Reading from the N-terminus, the 517-residue chain is Glutamate--tRNA ligase (517 aa).

The short motif at 10–20 is the 'HIGH' region element; that stretch reads PSPSGFLHVGG. Residues cysteine 107, cysteine 109, cysteine 134, and aspartate 136 each contribute to the Zn(2+) site. Residues 250-254 carry the 'KMSKS' region motif; the sequence is KLSKR. Lysine 253 provides a ligand contact to ATP.

This sequence belongs to the class-I aminoacyl-tRNA synthetase family. Glutamate--tRNA ligase type 1 subfamily. As to quaternary structure, monomer. Requires Zn(2+) as cofactor.

Its subcellular location is the cytoplasm. It carries out the reaction tRNA(Glu) + L-glutamate + ATP = L-glutamyl-tRNA(Glu) + AMP + diphosphate. Functionally, catalyzes the attachment of glutamate to tRNA(Glu) in a two-step reaction: glutamate is first activated by ATP to form Glu-AMP and then transferred to the acceptor end of tRNA(Glu). The chain is Glutamate--tRNA ligase from Leptospira biflexa serovar Patoc (strain Patoc 1 / ATCC 23582 / Paris).